The following is an 83-amino-acid chain: Exodeoxyribonuclease 7 small subunit (83 aa).

It belongs to the XseB family. In terms of assembly, heterooligomer composed of large and small subunits.

It is found in the cytoplasm. It catalyses the reaction Exonucleolytic cleavage in either 5'- to 3'- or 3'- to 5'-direction to yield nucleoside 5'-phosphates.. In terms of biological role, bidirectionally degrades single-stranded DNA into large acid-insoluble oligonucleotides, which are then degraded further into small acid-soluble oligonucleotides. The polypeptide is Exodeoxyribonuclease 7 small subunit (Sinorhizobium medicae (strain WSM419) (Ensifer medicae)).